Consider the following 355-residue polypeptide: Probable poly-beta-1,6-N-acetyl-D-glucosamine export protein (355 aa).

10 consecutive transmembrane segments (helical) span residues 13-30 (AFIC…QITL), 45-67 (YIRN…LTTL), 74-96 (INYL…LFYS), 116-138 (VLGQ…SYII), 145-167 (LFNS…HYFL), 187-204 (MILG…IGYN), 211-233 (FLEK…FIAV), 243-262 (SFTY…LLGV), 269-291 (MLLN…HPII), and 306-328 (TIVF…GMML).

This sequence belongs to the acyltransferase 3 family.

The protein resides in the cell membrane. Presumably involved in the export of the biofilm adhesin polysaccharide poly-beta-1,6-N-acetyl-D-glucosamine (PNAG, also referred to as PIA) across the cell membrane. The sequence is that of Probable poly-beta-1,6-N-acetyl-D-glucosamine export protein (icaC) from Staphylococcus epidermidis.